The sequence spans 111 residues: uncharacterized protein (111 aa).

This is an uncharacterized protein from Saccharolobus solfataricus (strain ATCC 35092 / DSM 1617 / JCM 11322 / P2) (Sulfolobus solfataricus).